We begin with the raw amino-acid sequence, 432 residues long: MSEISVIILAAGFGTRMKSKKAKVLFELCGEPMLFHILKKAYEITDNVNVVLHYDFENIKNIVLSKFPNVKIYKQDHENFPGTAGALKNINLNSQKTLIICGDMPLVKTAELKKLCKGETDINLSVFYAENPFGYGRVINKNGKILKIVEQKDANEQELKENCVNAGAYCFKTDILKQILPLIKNENSQKEYYLTDAIEIALQKKLKCQAIEVAEENFMGINDKFALSKAETIIQNEIKENLMKNGVLMRLPESIYIDSRAKFIGECELHENVSIIGSCVIENSIIKSSSVIENSHIINSDIGPMAHIRPDCEISDTHIGNFVELKKAKVNKIKAGHLSYLGDCEIQEGTNVGCGTITCNYDGKRKYRTKIGKNVFIGSDTQLVAPVEIQDNVLIAAGSTITKNVEEGSLAISRIKQENKPGFFAKFFKEIK.

Residues 1 to 224 (MSEISVIILA…EENFMGINDK (224 aa)) are pyrophosphorylase. Residues 9-12 (LAAG), lysine 23, and 82-83 (GT) contribute to the UDP-N-acetyl-alpha-D-glucosamine site. Aspartate 103 lines the Mg(2+) pocket. 4 residues coordinate UDP-N-acetyl-alpha-D-glucosamine: glycine 136, glutamate 150, asparagine 165, and asparagine 222. Asparagine 222 provides a ligand contact to Mg(2+). Positions 225 to 245 (FALSKAETIIQNEIKENLMKN) are linker. An N-acetyltransferase region spans residues 246-432 (GVLMRLPESI…FFAKFFKEIK (187 aa)). The UDP-N-acetyl-alpha-D-glucosamine site is built by arginine 309 and lysine 326. Histidine 337 (proton acceptor) is an active-site residue. Residues tyrosine 340 and asparagine 351 each contribute to the UDP-N-acetyl-alpha-D-glucosamine site. Acetyl-CoA contacts are provided by residues 360 to 361 (NY), serine 379, alanine 397, and arginine 414.

In the N-terminal section; belongs to the N-acetylglucosamine-1-phosphate uridyltransferase family. The protein in the C-terminal section; belongs to the transferase hexapeptide repeat family. In terms of assembly, homotrimer. Requires Mg(2+) as cofactor.

It is found in the cytoplasm. It catalyses the reaction alpha-D-glucosamine 1-phosphate + acetyl-CoA = N-acetyl-alpha-D-glucosamine 1-phosphate + CoA + H(+). It carries out the reaction N-acetyl-alpha-D-glucosamine 1-phosphate + UTP + H(+) = UDP-N-acetyl-alpha-D-glucosamine + diphosphate. The protein operates within nucleotide-sugar biosynthesis; UDP-N-acetyl-alpha-D-glucosamine biosynthesis; N-acetyl-alpha-D-glucosamine 1-phosphate from alpha-D-glucosamine 6-phosphate (route II): step 2/2. It functions in the pathway nucleotide-sugar biosynthesis; UDP-N-acetyl-alpha-D-glucosamine biosynthesis; UDP-N-acetyl-alpha-D-glucosamine from N-acetyl-alpha-D-glucosamine 1-phosphate: step 1/1. Its pathway is bacterial outer membrane biogenesis; LPS lipid A biosynthesis. Functionally, catalyzes the last two sequential reactions in the de novo biosynthetic pathway for UDP-N-acetylglucosamine (UDP-GlcNAc). The C-terminal domain catalyzes the transfer of acetyl group from acetyl coenzyme A to glucosamine-1-phosphate (GlcN-1-P) to produce N-acetylglucosamine-1-phosphate (GlcNAc-1-P), which is converted into UDP-GlcNAc by the transfer of uridine 5-monophosphate (from uridine 5-triphosphate), a reaction catalyzed by the N-terminal domain. The protein is Bifunctional protein GlmU of Campylobacter hominis (strain ATCC BAA-381 / DSM 21671 / CCUG 45161 / LMG 19568 / NCTC 13146 / CH001A).